Consider the following 162-residue polypeptide: SsrA-binding protein (162 aa).

This sequence belongs to the SmpB family.

It is found in the cytoplasm. In terms of biological role, required for rescue of stalled ribosomes mediated by trans-translation. Binds to transfer-messenger RNA (tmRNA), required for stable association of tmRNA with ribosomes. tmRNA and SmpB together mimic tRNA shape, replacing the anticodon stem-loop with SmpB. tmRNA is encoded by the ssrA gene; the 2 termini fold to resemble tRNA(Ala) and it encodes a 'tag peptide', a short internal open reading frame. During trans-translation Ala-aminoacylated tmRNA acts like a tRNA, entering the A-site of stalled ribosomes, displacing the stalled mRNA. The ribosome then switches to translate the ORF on the tmRNA; the nascent peptide is terminated with the 'tag peptide' encoded by the tmRNA and targeted for degradation. The ribosome is freed to recommence translation, which seems to be the essential function of trans-translation. The sequence is that of SsrA-binding protein from Buchnera aphidicola subsp. Acyrthosiphon pisum (strain 5A).